Consider the following 92-residue polypeptide: Small ribosomal subunit protein uS19 (92 aa).

It belongs to the universal ribosomal protein uS19 family.

Its function is as follows. Protein S19 forms a complex with S13 that binds strongly to the 16S ribosomal RNA. The polypeptide is Small ribosomal subunit protein uS19 (Buchnera aphidicola subsp. Acyrthosiphon pisum (strain 5A)).